The following is a 206-amino-acid chain: MSGLFVSFEGVDGVGKTTQVERLRAYLEAQGRTVVVTREPGGTALGKAIRQLLLHGVDGGAVDIAPRAEALLFAADRAQHVAETIRPALERGEVVITDRYLDSSLAYQAGGRELTPEEIRSLSMWATNNLLPDRTYLLDMDPALSHNRLEHAEDRMESAGSDFQSRTRQAFLDLAAAEPNRFRVIDASQSIEAVWAAIESDIKELA.

Residue 10–17 participates in ATP binding; it reads GVDGVGKT.

It belongs to the thymidylate kinase family.

It catalyses the reaction dTMP + ATP = dTDP + ADP. In terms of biological role, phosphorylation of dTMP to form dTDP in both de novo and salvage pathways of dTTP synthesis. In Bifidobacterium longum (strain DJO10A), this protein is Thymidylate kinase.